The following is a 366-amino-acid chain: tRNA 2-selenouridine synthase (366 aa).

In terms of domain architecture, Rhodanese spans 12-135; the sequence is FLNDVPMMDA…MRTFLLDTLH (124 aa). Residue cysteine 95 is the S-selanylcysteine intermediate of the active site.

It belongs to the SelU family. In terms of assembly, monomer.

The catalysed reaction is 5-methylaminomethyl-2-thiouridine(34) in tRNA + selenophosphate + (2E)-geranyl diphosphate + H2O + H(+) = 5-methylaminomethyl-2-selenouridine(34) in tRNA + (2E)-thiogeraniol + phosphate + diphosphate. It carries out the reaction 5-methylaminomethyl-2-thiouridine(34) in tRNA + (2E)-geranyl diphosphate = 5-methylaminomethyl-S-(2E)-geranyl-thiouridine(34) in tRNA + diphosphate. It catalyses the reaction 5-methylaminomethyl-S-(2E)-geranyl-thiouridine(34) in tRNA + selenophosphate + H(+) = 5-methylaminomethyl-2-(Se-phospho)selenouridine(34) in tRNA + (2E)-thiogeraniol. The enzyme catalyses 5-methylaminomethyl-2-(Se-phospho)selenouridine(34) in tRNA + H2O = 5-methylaminomethyl-2-selenouridine(34) in tRNA + phosphate. Functionally, involved in the post-transcriptional modification of the uridine at the wobble position (U34) of tRNA(Lys), tRNA(Glu) and tRNA(Gln). Catalyzes the conversion of 2-thiouridine (S2U-RNA) to 2-selenouridine (Se2U-RNA). Acts in a two-step process involving geranylation of 2-thiouridine (S2U) to S-geranyl-2-thiouridine (geS2U) and subsequent selenation of the latter derivative to 2-selenouridine (Se2U) in the tRNA chain. The polypeptide is tRNA 2-selenouridine synthase (Pseudomonas syringae pv. syringae (strain B728a)).